We begin with the raw amino-acid sequence, 1217 residues long: DNA-directed RNA polymerase subunit beta' (1217 aa).

The Zn(2+) site is built by Cys60, Cys62, Cys75, and Cys78. Mg(2+)-binding residues include Asp449, Asp451, and Asp453. Zn(2+) is bound by residues Cys818, Cys892, Cys899, and Cys902.

It belongs to the RNA polymerase beta' chain family. In terms of assembly, the RNAP catalytic core consists of 2 alpha, 1 beta, 1 beta' and 1 omega subunit. When a sigma factor is associated with the core the holoenzyme is formed, which can initiate transcription. Mg(2+) serves as cofactor. Zn(2+) is required as a cofactor.

It catalyses the reaction RNA(n) + a ribonucleoside 5'-triphosphate = RNA(n+1) + diphosphate. DNA-dependent RNA polymerase catalyzes the transcription of DNA into RNA using the four ribonucleoside triphosphates as substrates. In Enterococcus faecalis (strain ATCC 700802 / V583), this protein is DNA-directed RNA polymerase subunit beta'.